Consider the following 299-residue polypeptide: Dihydroorotate dehydrogenase B (NAD(+)), catalytic subunit (299 aa).

Residues Ser-21 and 44-45 contribute to the FMN site; that span reads KS. Substrate contacts are provided by residues Lys-44, 68 to 72, and Asn-125; that span reads NAVGL. FMN is bound at residue Asn-125. Cys-128 serves as the catalytic Nucleophile. Lys-163 contributes to the FMN binding site. 189-190 is a substrate binding site; it reads NT. Residues Gly-214, 240–241, and 262–263 contribute to the FMN site; these read GG and GS.

It belongs to the dihydroorotate dehydrogenase family. Type 1 subfamily. In terms of assembly, heterotetramer of 2 PyrK and 2 PyrD type B subunits. FMN is required as a cofactor.

It is found in the cytoplasm. The catalysed reaction is (S)-dihydroorotate + NAD(+) = orotate + NADH + H(+). The protein operates within pyrimidine metabolism; UMP biosynthesis via de novo pathway; orotate from (S)-dihydroorotate (NAD(+) route): step 1/1. Its function is as follows. Catalyzes the conversion of dihydroorotate to orotate with NAD(+) as electron acceptor. The protein is Dihydroorotate dehydrogenase B (NAD(+)), catalytic subunit (pyrD) of Archaeoglobus fulgidus (strain ATCC 49558 / DSM 4304 / JCM 9628 / NBRC 100126 / VC-16).